Consider the following 254-residue polypeptide: Nodulation protein J (254 aa).

6 consecutive transmembrane segments (helical) span residues 25–45, 60–80, 106–126, 133–153, 169–189, and 230–250; these read ASVL…GVGL, FLAC…EMLY, LIGE…IVAV, YIPG…ALIF, LFAF…GVIV, and LLLS…VICV. Residues 25–251 form the ABC transmembrane type-2 domain; sequence ASVLGSVIDP…FISAKVICVR (227 aa).

This sequence belongs to the ABC-2 integral membrane protein family. Lipooligosaccharide exporter (TC 3.A.1.102) subfamily. In terms of assembly, the complex is composed of two ATP-binding proteins (NodI) and two transmembrane proteins (NodJ).

It localises to the cell inner membrane. Functionally, part of the ABC transporter complex NodIJ involved in the export of the nodulation factors (Nod factors), the bacterial signal molecules that induce symbiosis and subsequent nodulation induction. Nod factors are LCO (lipo-chitin oligosaccharide), a modified beta-1,4-linked N-acetylglucosamine oligosaccharide. This subunit encodes the transporter. The chain is Nodulation protein J (nodJ) from Azorhizobium caulinodans (strain ATCC 43989 / DSM 5975 / JCM 20966 / LMG 6465 / NBRC 14845 / NCIMB 13405 / ORS 571).